Consider the following 218-residue polypeptide: Monomethylamine corrinoid protein 2 (218 aa).

Residues 1-91 (MTNTEIFNKL…ELEKTKVEGE (91 aa)) enclose the B12-binding N-terminal domain. In terms of domain architecture, B12-binding spans 94-218 (TGLAITFVAE…AAKVALNVMK (125 aa)). Histidine 107 contributes to the methylcob(III)alamin binding site.

This sequence belongs to the methylamine corrinoid protein family. In terms of assembly, can form a complex with MtmB.

Its pathway is one-carbon metabolism; methanogenesis from methylamine. Acts as a methyl group carrier between MtmB and MtbA. This Methanosarcina mazei (strain ATCC BAA-159 / DSM 3647 / Goe1 / Go1 / JCM 11833 / OCM 88) (Methanosarcina frisia) protein is Monomethylamine corrinoid protein 2 (mtmC2).